We begin with the raw amino-acid sequence, 205 residues long: MFAVIKTGGKQYKVAEGDTIVIERLAAAAGETVTFDSVLMVGAGAGVTVGAPMVAGATVTGEVAAEVRGPKLITRKKRQRQTYRRTIGHRQDLMEVTITSINTDGKAPAKKAAAKKEEAPKADTAPKAAAAPTEEAAAGGDNLKKITGIGPALEKKLNAAGITTFAQIAALSADDIAKLEEELSLAGRFAKDGWVEQAAELAKEA.

The interval 107–137 (APAKKAAAKKEEAPKADTAPKAAAAPTEEAA) is disordered. The span at 122 to 137 (ADTAPKAAAAPTEEAA) shows a compositional bias: low complexity.

Belongs to the bacterial ribosomal protein bL21 family. As to quaternary structure, part of the 50S ribosomal subunit. Contacts protein L20.

In terms of biological role, this protein binds to 23S rRNA in the presence of protein L20. In Hyphomonas neptunium (strain ATCC 15444), this protein is Large ribosomal subunit protein bL21.